The chain runs to 206 residues: Dephospho-CoA kinase (206 aa).

The region spanning 4 to 204 is the DPCK domain; that stretch reads IVGLTGGIGS…QFYLQQAENK (201 aa). 12-17 contributes to the ATP binding site; that stretch reads GSGKTT.

The protein belongs to the CoaE family.

It localises to the cytoplasm. The enzyme catalyses 3'-dephospho-CoA + ATP = ADP + CoA + H(+). The protein operates within cofactor biosynthesis; coenzyme A biosynthesis; CoA from (R)-pantothenate: step 5/5. Functionally, catalyzes the phosphorylation of the 3'-hydroxyl group of dephosphocoenzyme A to form coenzyme A. In Haemophilus influenzae (strain ATCC 51907 / DSM 11121 / KW20 / Rd), this protein is Dephospho-CoA kinase.